The following is a 453-amino-acid chain: Signal recognition particle protein (453 aa).

Residues glycine 107 to threonine 114, aspartate 190 to arginine 194, and threonine 248 to aspartate 251 each bind GTP.

The protein belongs to the GTP-binding SRP family. SRP54 subfamily. As to quaternary structure, part of the signal recognition particle protein translocation system, which is composed of SRP and FtsY. SRP is a ribonucleoprotein composed of Ffh and a 4.5S RNA molecule.

The protein localises to the cytoplasm. It carries out the reaction GTP + H2O = GDP + phosphate + H(+). Involved in targeting and insertion of nascent membrane proteins into the cytoplasmic membrane. Binds to the hydrophobic signal sequence of the ribosome-nascent chain (RNC) as it emerges from the ribosomes. The SRP-RNC complex is then targeted to the cytoplasmic membrane where it interacts with the SRP receptor FtsY. Interaction with FtsY leads to the transfer of the RNC complex to the Sec translocase for insertion into the membrane, the hydrolysis of GTP by both Ffh and FtsY, and the dissociation of the SRP-FtsY complex into the individual components. This is Signal recognition particle protein from Escherichia coli O157:H7.